We begin with the raw amino-acid sequence, 133 residues long: Large ribosomal subunit protein bL20 (133 aa).

This sequence belongs to the bacterial ribosomal protein bL20 family.

In terms of biological role, binds directly to 23S ribosomal RNA and is necessary for the in vitro assembly process of the 50S ribosomal subunit. It is not involved in the protein synthesizing functions of that subunit. The sequence is that of Large ribosomal subunit protein bL20 from Bartonella tribocorum (strain CIP 105476 / IBS 506).